Here is a 409-residue protein sequence, read N- to C-terminus: Pleckstrin homology domain-containing family O member 1 (409 aa).

The tract at residues 1 to 20 (MMKKNNSTKRGPQDGNHQCA) is disordered. One can recognise a PH domain in the interval 21 to 132 (PPEKVGWVRK…WINALNSAIT (112 aa)). The tract at residues 133-193 (RAKNRVLDEV…MLTLDLIQEE (61 aa)) is interaction with capping proteins (CPs). Residues 136 to 308 (NRVLDEVTVE…PHAPGQLSRI (173 aa)) form an interaction with ATM, CKIP, IFP35 and NMI region. Disordered stretches follow at residues 218-304 (LAGS…APGQ), 325-350 (EVQG…ESEQ), and 390-409 (TPDS…KSLM). Phosphoserine occurs at positions 227 and 271. The negative regulator of AP-1 activity stretch occupies residues 308–409 (IQDLVARKLE…QHSQYRKSLM (102 aa)). Over residues 331 to 340 (DGKRKAKEPP) the composition is skewed to basic and acidic residues. A Phosphoserine modification is found at Ser-342. Over residues 390–402 (TPDSHLRQTTQHS) the composition is skewed to polar residues.

Heterodimer or homodimer. Interacts with CK2 and actin capping subunits (capping protein CP-alpha and CP-beta). CKIP1 and CK2 together inhibit the activity of actin capping protein at the barbed ends of actin filaments. Interacts with ATM, IFP35, JUN, JUND, NMI and PI3K. Interacts with AKT1, AKT2 and AKT3 (each isozyme of PKB), PtdIns(3,5)P2, PtdIns(4,5)P2 and PtdIns(3,4,5)P2. C-terminal fragments could be released during apoptosis via caspase-3-dependent cleavage.

Its subcellular location is the membrane. It is found in the nucleus. It localises to the cytoplasm. Functionally, plays a role in the regulation of the actin cytoskeleton through its interactions with actin capping protein (CP). May function to target CK2 to the plasma membrane thereby serving as an adapter to facilitate the phosphorylation of CP by protein kinase 2 (CK2). Appears to target ATM to the plasma membrane. Also implicated in PI3K-regulated muscle differentiation, the regulation of AP-1 activity (plasma membrane bound AP-1 regulator that translocates to the nucleus) and the promotion of apoptosis induced by tumor necrosis factor TNF. When bound to PKB, it inhibits it probably by decreasing PKB level of phosphorylation. The polypeptide is Pleckstrin homology domain-containing family O member 1 (PLEKHO1) (Bos taurus (Bovine)).